Here is a 307-residue protein sequence, read N- to C-terminus: Putative S-adenosyl-L-methionine-dependent methyltransferase Mflv_5025 (307 aa).

S-adenosyl-L-methionine-binding positions include Asp-130 and 159 to 160; that span reads DL.

This sequence belongs to the UPF0677 family.

In terms of biological role, exhibits S-adenosyl-L-methionine-dependent methyltransferase activity. The protein is Putative S-adenosyl-L-methionine-dependent methyltransferase Mflv_5025 of Mycolicibacterium gilvum (strain PYR-GCK) (Mycobacterium gilvum (strain PYR-GCK)).